Here is a 358-residue protein sequence, read N- to C-terminus: D-xylulose reductase A (358 aa).

Zn(2+) contacts are provided by cysteine 47, histidine 72, and glutamate 73. An NAD(+)-binding site is contributed by 182 to 187; that stretch reads GAGPVG.

This sequence belongs to the zinc-containing alcohol dehydrogenase family. Requires Zn(2+) as cofactor.

The enzyme catalyses xylitol + NAD(+) = D-xylulose + NADH + H(+). It participates in carbohydrate degradation; L-arabinose degradation via L-arabinitol; D-xylulose 5-phosphate from L-arabinose (fungal route): step 4/5. Functionally, xylitol dehydrogenase which catalyzes the conversion of xylitol to D-xylulose. Xylose is a major component of hemicelluloses such as xylan. Most fungi utilize D-xylose via three enzymatic reactions, xylose reductase (XR), xylitol dehydrogenase (XDH), and xylulokinase, to form xylulose 5-phosphate, which enters pentose phosphate pathway. In Aspergillus oryzae (strain ATCC 42149 / RIB 40) (Yellow koji mold), this protein is D-xylulose reductase A (xdhA).